The chain runs to 335 residues: Probable tRNA N6-adenosine threonylcarbamoyltransferase (335 aa).

A divalent metal cation-binding residues include H109, H113, and Y130. Residues 130-134 (YVSGG), D162, G177, E181, and N266 each bind substrate. Residue D294 coordinates a divalent metal cation.

Belongs to the KAE1 / TsaD family. Component of the EKC/KEOPS complex; the whole complex dimerizes. The cofactor is a divalent metal cation.

The protein resides in the cytoplasm. It is found in the nucleus. It catalyses the reaction L-threonylcarbamoyladenylate + adenosine(37) in tRNA = N(6)-L-threonylcarbamoyladenosine(37) in tRNA + AMP + H(+). Functionally, component of the EKC/KEOPS complex that is required for the formation of a threonylcarbamoyl group on adenosine at position 37 (t(6)A37) in tRNAs that read codons beginning with adenine. The complex is probably involved in the transfer of the threonylcarbamoyl moiety of threonylcarbamoyl-AMP (TC-AMP) to the N6 group of A37. Osgep likely plays a direct catalytic role in this reaction, but requires other protein(s) of the complex to fulfill this activity. This chain is Probable tRNA N6-adenosine threonylcarbamoyltransferase, found in Nematostella vectensis (Starlet sea anemone).